Reading from the N-terminus, the 666-residue chain is Endogenous retrovirus group K member 21 Gag polyprotein (666 aa).

G2 carries the N-myristoyl glycine lipid modification. 2 disordered regions span residues 165–189 (GKGP…AGQV) and 217–264 (ELQY…GSEL). Residues 232 to 247 (GMPPAPQGRAPYPQPP) are compositionally biased toward pro residues. CCHC-type zinc fingers lie at residues 544–561 (GKCY…NCPV) and 580–597 (DLCP…QCRS). Positions 598 to 641 (KFDKNGQPLSGNEQRGQPQAPQQTGAFPIQPFVPQGFQGQQPPL) are disordered. Residues 604–622 (QPLSGNEQRGQPQAPQQTG) show a composition bias toward polar residues. Residues 624–640 (FPIQPFVPQGFQGQQPP) are compositionally biased toward low complexity.

It belongs to the beta type-B retroviral Gag protein family. HERV class-II K(HML-2) gag subfamily. Post-translationally, myristoylation is essential for retroviral assembly. Alteration of the glycine residue leads to a block in the budding of particles and an accumulation of Gag inside the cell. In terms of processing, specific enzymatic cleavages may yield mature proteins.

Its subcellular location is the cell membrane. In terms of biological role, the products of the Gag polyproteins of infectious retroviruses perform highly complex orchestrated tasks during the assembly, budding, maturation, and infection stages of the viral replication cycle. During viral assembly, the proteins form membrane associations and self-associations that ultimately result in budding of an immature virion from the infected cell. Gag precursors also function during viral assembly to selectively bind and package two plus strands of genomic RNA. Endogenous Gag proteins may have kept, lost or modified their original function during evolution. In Homo sapiens (Human), this protein is Endogenous retrovirus group K member 21 Gag polyprotein (ERVK-21).